The following is a 207-amino-acid chain: Holliday junction branch migration complex subunit RuvA (207 aa).

Residues 1 to 63 (MIGMLKGRVE…QDAITLFGFL (63 aa)) are domain I. The domain II stretch occupies residues 64 to 142 (DARSKRMFLQ…VDKIETGEPT (79 aa)). Residues 143–153 (STQRIPTDKGV) are flexible linker. The domain III stretch occupies residues 153-207 (VEQVVEGLMSLGWKQADAQQAVDSVISSSGIALPLEEGNVPTVLRLALTSLDRGR).

The protein belongs to the RuvA family. As to quaternary structure, homotetramer. Forms an RuvA(8)-RuvB(12)-Holliday junction (HJ) complex. HJ DNA is sandwiched between 2 RuvA tetramers; dsDNA enters through RuvA and exits via RuvB. An RuvB hexamer assembles on each DNA strand where it exits the tetramer. Each RuvB hexamer is contacted by two RuvA subunits (via domain III) on 2 adjacent RuvB subunits; this complex drives branch migration. In the full resolvosome a probable DNA-RuvA(4)-RuvB(12)-RuvC(2) complex forms which resolves the HJ.

The protein resides in the cytoplasm. Its function is as follows. The RuvA-RuvB-RuvC complex processes Holliday junction (HJ) DNA during genetic recombination and DNA repair, while the RuvA-RuvB complex plays an important role in the rescue of blocked DNA replication forks via replication fork reversal (RFR). RuvA specifically binds to HJ cruciform DNA, conferring on it an open structure. The RuvB hexamer acts as an ATP-dependent pump, pulling dsDNA into and through the RuvAB complex. HJ branch migration allows RuvC to scan DNA until it finds its consensus sequence, where it cleaves and resolves the cruciform DNA. The sequence is that of Holliday junction branch migration complex subunit RuvA from Bifidobacterium animalis subsp. lactis (strain AD011).